The primary structure comprises 450 residues: Probable glycine dehydrogenase (decarboxylating) subunit 1 (450 aa).

Belongs to the GcvP family. N-terminal subunit subfamily. The glycine cleavage system is composed of four proteins: P, T, L and H. In this organism, the P 'protein' is a heterodimer of two subunits.

It catalyses the reaction N(6)-[(R)-lipoyl]-L-lysyl-[glycine-cleavage complex H protein] + glycine + H(+) = N(6)-[(R)-S(8)-aminomethyldihydrolipoyl]-L-lysyl-[glycine-cleavage complex H protein] + CO2. Functionally, the glycine cleavage system catalyzes the degradation of glycine. The P protein binds the alpha-amino group of glycine through its pyridoxal phosphate cofactor; CO(2) is released and the remaining methylamine moiety is then transferred to the lipoamide cofactor of the H protein. In Staphylococcus haemolyticus (strain JCSC1435), this protein is Probable glycine dehydrogenase (decarboxylating) subunit 1.